A 415-amino-acid chain; its full sequence is Maintenance of mitochondrial morphology protein 1 (415 aa).

The Lumenal portion of the chain corresponds to 1-18 (MADICPSRSEPTLSFTQG). A helical transmembrane segment spans residues 19–39 (LILGQLSVVLLLAAFIKFFIF). The Cytoplasmic portion of the chain corresponds to 40-415 (GDPPSPEVVA…MPGSMPGSMP (376 aa)). Residues 114-330 (QPESLDWFNV…EPRFQEIALP (217 aa)) enclose the SMP-LTD domain. The span at 373–389 (IEAEAHGGADRVPDSLR) shows a compositional bias: basic and acidic residues. A disordered region spans residues 373 to 415 (IEAEAHGGADRVPDSLRYRHRPRADEEFPGAGSMPGSMPGSMP). The segment covering 404–415 (GSMPGSMPGSMP) has biased composition (low complexity).

It belongs to the MMM1 family. Homodimer. Component of the ER-mitochondria encounter structure (ERMES) or MDM complex, composed of mmm-1, mdm10, mdm12 and mdm34. A mmm-1 homodimer associates with one molecule of mdm12 on each side in a pairwise head-to-tail manner, and the SMP-LTD domains of mmm-1 and mdm12 generate a continuous hydrophobic tunnel for phospholipid trafficking.

It is found in the endoplasmic reticulum membrane. Functionally, component of the ERMES/MDM complex, which serves as a molecular tether to connect the endoplasmic reticulum (ER) and mitochondria. Components of this complex are involved in the control of mitochondrial shape and protein biogenesis, and function in nonvesicular lipid trafficking between the ER and mitochondria. The mdm12-mmm-1 subcomplex functions in the major beta-barrel assembly pathway that is responsible for biogenesis of all outer membrane beta-barrel proteins, and acts in a late step after the SAM complex. The mdm10-mdm12-mmm-1 subcomplex further acts in the TOM40-specific pathway after the action of the mdm12-mmm-1 complex. Essential for establishing and maintaining the structure of mitochondria and maintenance of mtDNA nucleoids. This is Maintenance of mitochondrial morphology protein 1 (mmm-1) from Neurospora crassa (strain ATCC 24698 / 74-OR23-1A / CBS 708.71 / DSM 1257 / FGSC 987).